The following is a 273-amino-acid chain: Dermonecrotic toxin SdSicTox-betaIIB1aiii (273 aa).

Residue His-4 is part of the active site. 2 residues coordinate Mg(2+): Glu-24 and Asp-26. Residue His-40 is the Nucleophile of the active site. 2 cysteine pairs are disulfide-bonded: Cys-44–Cys-50 and Cys-46–Cys-189. Asp-84 serves as a coordination point for Mg(2+).

It belongs to the arthropod phospholipase D family. Class II subfamily. Mg(2+) is required as a cofactor. As to expression, expressed by the venom gland.

The protein localises to the secreted. The enzyme catalyses an N-(acyl)-sphingosylphosphocholine = an N-(acyl)-sphingosyl-1,3-cyclic phosphate + choline. It carries out the reaction an N-(acyl)-sphingosylphosphoethanolamine = an N-(acyl)-sphingosyl-1,3-cyclic phosphate + ethanolamine. The catalysed reaction is a 1-acyl-sn-glycero-3-phosphocholine = a 1-acyl-sn-glycero-2,3-cyclic phosphate + choline. It catalyses the reaction a 1-acyl-sn-glycero-3-phosphoethanolamine = a 1-acyl-sn-glycero-2,3-cyclic phosphate + ethanolamine. Its function is as follows. Dermonecrotic toxins cleave the phosphodiester linkage between the phosphate and headgroup of certain phospholipids (sphingolipid and lysolipid substrates), forming an alcohol (often choline) and a cyclic phosphate. This toxin acts on sphingomyelin (SM). It may also act on ceramide phosphoethanolamine (CPE), lysophosphatidylcholine (LPC) and lysophosphatidylethanolamine (LPE), but not on lysophosphatidylserine (LPS), and lysophosphatidylglycerol (LPG). It acts by transphosphatidylation, releasing exclusively cyclic phosphate products as second products. Induces dermonecrosis, hemolysis, increased vascular permeability, edema, inflammatory response, and platelet aggregation. This is Dermonecrotic toxin SdSicTox-betaIIB1aiii from Sicarius cf. damarensis (strain GJB-2008) (Six-eyed sand spider).